A 145-amino-acid chain; its full sequence is Hemoglobin subunit beta (145 aa).

Residues 1–145 (MLTAEEKAAV…VANALAHRYH (145 aa)) enclose the Globin domain. Thr-11 is modified (phosphothreonine). At Ser-43 the chain carries Phosphoserine. N6-acetyllysine is present on Lys-58. His-62 contributes to the heme b binding site. Lys-81 is subject to N6-acetyllysine. Heme b is bound at residue His-91. Position 92 is an S-nitrosocysteine (Cys-92).

It belongs to the globin family. As to quaternary structure, heterotetramer of two alpha chains and two beta chains. As to expression, red blood cells.

Functionally, involved in oxygen transport from the lung to the various peripheral tissues. The polypeptide is Hemoglobin subunit beta (HBB) (Tragelaphus strepsiceros (Greater kudu)).